The following is a 268-amino-acid chain: 1D-myo-inositol 2-acetamido-2-deoxy-alpha-D-glucopyranoside deacetylase (268 aa).

The Zn(2+) site is built by H7, D10, and H142.

Belongs to the MshB deacetylase family. Requires Zn(2+) as cofactor.

The enzyme catalyses 1D-myo-inositol 2-acetamido-2-deoxy-alpha-D-glucopyranoside + H2O = 1D-myo-inositol 2-amino-2-deoxy-alpha-D-glucopyranoside + acetate. In terms of biological role, catalyzes the deacetylation of 1D-myo-inositol 2-acetamido-2-deoxy-alpha-D-glucopyranoside (GlcNAc-Ins) in the mycothiol biosynthesis pathway. This is 1D-myo-inositol 2-acetamido-2-deoxy-alpha-D-glucopyranoside deacetylase from Saccharomonospora viridis (strain ATCC 15386 / DSM 43017 / JCM 3036 / CCUG 5913 / NBRC 12207 / NCIMB 9602 / P101) (Thermoactinomyces viridis).